A 414-amino-acid polypeptide reads, in one-letter code: 3-oxoacyl-[acyl-carrier-protein] synthase 2 (414 aa).

Residues 4-411 (NIRVVITGMG…GHNAVLVFKK (408 aa)) enclose the Ketosynthase family 3 (KS3) domain. Catalysis depends on for beta-ketoacyl synthase activity residues C165, H304, and H341.

It belongs to the thiolase-like superfamily. Beta-ketoacyl-ACP synthases family.

The enzyme catalyses a fatty acyl-[ACP] + malonyl-[ACP] + H(+) = a 3-oxoacyl-[ACP] + holo-[ACP] + CO2. It catalyses the reaction (9Z)-hexadecenoyl-[ACP] + malonyl-[ACP] + H(+) = 3-oxo-(11Z)-octadecenoyl-[ACP] + holo-[ACP] + CO2. The protein operates within lipid metabolism; fatty acid biosynthesis. Involved in the type II fatty acid elongation cycle. Catalyzes the elongation of a wide range of acyl-ACP by the addition of two carbons from malonyl-ACP to an acyl acceptor. Can efficiently catalyze the conversion of palmitoleoyl-ACP (cis-hexadec-9-enoyl-ACP) to cis-vaccenoyl-ACP (cis-octadec-11-enoyl-ACP), an essential step in the thermal regulation of fatty acid composition. The polypeptide is 3-oxoacyl-[acyl-carrier-protein] synthase 2 (fabF) (Staphylococcus aureus (strain MRSA252)).